A 371-amino-acid polypeptide reads, in one-letter code: uncharacterized protein (371 aa).

Helical transmembrane passes span 9-29, 58-78, 98-118, 133-153, 159-179, 183-203, and 330-350; these read FTLD…VFLI, VLAF…FLAI, LIVA…SFIF, LAPF…VSVI, YDVN…ALAA, ISNF…IGDW, and IIEI…MVVV.

It belongs to the MscS (TC 1.A.23) family.

Its subcellular location is the cell membrane. In terms of biological role, may play a role in resistance to osmotic downshock. This is an uncharacterized protein from Bacillus subtilis (strain 168).